Reading from the N-terminus, the 2066-residue chain is Kinesin-like protein KIN-12C (2066 aa).

2 disordered regions span residues 1-41 (MSRN…SQIQ) and 59-116 (RAQH…RVSL). The segment covering 20 to 33 (SLSLFSPSRPPLNS) has biased composition (low complexity). A compositionally biased stretch (basic and acidic residues) spans 67–76 (GPEKKFEVLE). Over residues 99–109 (EPNSAQSTPTR) the composition is skewed to polar residues. A Kinesin motor domain is found at 168 to 505 (NVQVLIRLRP…LKFAQRAKLI (338 aa)). 249–256 (GQTGSGKT) contributes to the ATP binding site. 3 microtubules-binding regions span residues 375 to 379 (SSRSH), 406 to 412 (VDLAGSE), and 454 to 458 (HVPYR). Coiled coils occupy residues 1521-1618 (DLKT…VDEI) and 1650-1772 (KIYA…EILL). 2 disordered regions span residues 1803 to 1823 (SAAETISHKTEKSSTRSRGSS) and 2043 to 2066 (KYRKTSNNHPSTRTQGQSSGTRYR). A coiled-coil region spans residues 1905–2051 (VQRVVEKAQQ…AKYRKTSNNH (147 aa)). The segment covering 2047–2066 (TSNNHPSTRTQGQSSGTRYR) has biased composition (polar residues).

Belongs to the TRAFAC class myosin-kinesin ATPase superfamily. Kinesin family. KIN-12 subfamily. In terms of assembly, interacts with TAN. Interacts with RANGAP1. In terms of tissue distribution, expressed in tissues enriched in dividing cells, such as root meristems, root primordia, and leaf primordia/young leaves.

The protein resides in the cytoplasm. It is found in the cytoskeleton. The protein localises to the phragmoplast. Its function is as follows. Involved in the spatial control of cytokinesis by a proper phragmoplast guidance. Localizes TAN to the cortical division sites (CDS) during cytokinesis via direct binding. The sequence is that of Kinesin-like protein KIN-12C from Arabidopsis thaliana (Mouse-ear cress).